Reading from the N-terminus, the 173-residue chain is Cytochrome c-type biogenesis protein CcmE (173 aa).

Topologically, residues 1 to 8 (MNPRRKSR) are cytoplasmic. Residues 9-29 (FKLVIFVVLGIAIASGLMLYA) form a helical; Signal-anchor for type II membrane protein membrane-spanning segment. At 30-173 (LRQNIDLFYT…RDRQEKEGAK (144 aa)) the chain is on the periplasmic side. 2 residues coordinate heme: histidine 131 and tyrosine 135. A disordered region spans residues 152–173 (GIEAADLKGESARDRQEKEGAK). The segment covering 156 to 173 (ADLKGESARDRQEKEGAK) has biased composition (basic and acidic residues).

Belongs to the CcmE/CycJ family.

It is found in the cell inner membrane. Its function is as follows. Heme chaperone required for the biogenesis of c-type cytochromes. Transiently binds heme delivered by CcmC and transfers the heme to apo-cytochromes in a process facilitated by CcmF and CcmH. In Haemophilus influenzae (strain ATCC 51907 / DSM 11121 / KW20 / Rd), this protein is Cytochrome c-type biogenesis protein CcmE.